A 410-amino-acid chain; its full sequence is MECNLGTEHHSTDTWNRSKTEQAVVDAFDESLFGDVASDIGSETSLYSHAVKTAPSPPWVASPKILYQQLIRDLDFSEGPRLLSCLETWNEDLFSCFPINEDLYSDMMVLSPDPDDVISTVSTKDHVEMFNLTTRGSVRLPSPPKQPTGLPAYVQEVQDSFTVELRAREEAYTKLLVTYCKSIIRYLQGTAKRTTIGLNIQNPDQKAYTQLRQSILLRYYREVASLARLLYLHLYLTVTREFSWRLYASQSAHPDVFAALKFTWTERRQFTCAFHPVLCNHGIVLLEGKPLTASALREINYRRRELGLPLVRCGLVEENKSPLVQQPSFSVHLPRSVGFLTHHIKRKLDAYAVKHPQEPRHVRADHPYAKVVENRNYGSSIEAMILAPPSPSEILPGDPPRPPTCGFLTR.

Positions 388–410 (PPSPSEILPGDPPRPPTCGFLTR) are disordered.

This sequence belongs to the herpesviridae tegument protein VP16 protein family. Associates with the VP16-induced complex; binding to host HCFC1 activates VP16 for association with the octamer motif-binding host protein POU2F1, to form a multiprotein-DNA complex responsible for activating transcription of the viral immediate early genes.

It localises to the virion tegument. The protein resides in the host nucleus. Its function is as follows. Transcriptional activator of immediate-early (IE) gene products (alpha genes). Acts as a key activator of lytic infection by initiating the lytic program through the assembly of the transcriptional regulatory VP16-induced complex composed of VP16 and two cellular factors, HCFC1 and POU2F 1. VP16-induced complex represents a regulatory switch: when it is on, it promotes IE-gene expression and thus lytic infection, and when it is off, it limits IE-gene transcription favoring latent infection. Functionally, may play a role in the aggregation of tegument proteins around nucleocapsids during virus morphogenesis. This is Tegument protein VP16 homolog from Varicella-zoster virus (strain Oka vaccine) (HHV-3).